Here is a 4513-residue protein sequence, read N- to C-terminus: MEPGDEGKGHQLTADATCIAWVRSKLQLLKPESLGDSDGAEWLSSVWHNDVHTPVVSTFLMSVKATRMFAALDGGHEGGSSPKLVLALEVPKQFEQMVYFVRDPSKFVTRENVGSVIFFGVMRGGDPLHSLLNIMHGLYVPVVVANTTWPETVKSDFTAQMHKFMANLTETVYEVKGKTILYIPQEDLRDPKAAAKQKDLVQRLESTIIHWTRQVKELLNQQDSVDASEQAGPLAEIEFWRERSVDLSGIRAQLDDGAVSSIVSVLEYAKSSYLAPFLSLRNLIHREAVAAEDNLKFLLCLEEPCQQLASAHPQTIPSLLPPILNCIRMVWNLSRFYNTPERLSVLLRKLSNEIINRCCSVISLPDVWSGDVDNVMVALRQSMEAGERWKELYKRTAAAVAVRSPKPWDFDISSIFAHIDAFLQRCNDLLEVCEAQLQFAPRTPLPVFGGTYGPEVKKSILDIQESFQGLVQGLQALKYDILDVKATRWHDDFNGFKGGVKDLEVMMANVIQRAFDTQPCLAARGELLEGFQTMAKRDYIRRFVEKKTVEFFALFNAEINTVKKLFDAVKRSQPKSPILPRYAGLAKYAMNLMRRLEQSHKVVDSVRYTLPQVSEAADVMQQYELAHQAIEQYISNTHNDWFSTIESSIAKELQACLLTQDKASGGLLSMNFHKDLLSMGQEVHFWERMRLAVPLVAMEINAQREKYRVLRDNILMVVRDYNKILTALDKEERKLFHDRIRYLDRRIMPGVTKLQWTADKHALEFYYREARKFCRDADMAVGDYKTANSRLDAICRSISELVLVDVEKKKIYQHAEFANLQESHHAKIKDRLVSAVDEIRDIMASIHRVFEQDSEEVQREWVRFTQKVDRKLEDALRHVIKKSLQELSRLLNGDNKTEVMPIFHVTMVLERTNRVELRPTIQALFDTINSVARNLILVLQSVPRVALQLTDKQRRDMEDAGLPLPKPLPTLYETISADEDAVLRTIMQITSGITSIIDKVQAFLTYWEKKYRQVWEADRDAYIRRYEKAQKPLSSFEADISRYLQCIDEIRGEDGATNMRFLRIDCGPLKLTLVGHCEAWVSKFTGLLGQLAATELRTLHTYFRENKDSLMLAPSTLEQLAELVGLHRRLADERRRTEARFEPLRDKYKLLERYEVGAKEEEAALLEGLEPAWTQFQALLDETAGKLERYKDNFREKVKSLLDTFLKDVAQLCEDFSRDAPYSSEVPTPDALDFIQASKQADEDTRKRAAEIKNGMDIFNIPQPQYKDLAAMEKDLDFLDRIWGLKDEWEQLYYGWKDGSFTDIKVEEMEEAAVRIGKNVAKLGRDIRQWTVWSSLKDTLDAFKRTMPLITDLRNPAMRPRHWQNLQDHIGVRFDPHSRDFTLDSLVALRLDQHVEFVAELSVNATKELAIENNIKAIAATWSALGLDMAEYKSTFKLRSTEEIFTSLEENIVTLSTMKASKYFIVFEKDIAYWEKTLSHISETIEIILQVQRNWMYLENIFIGSEDIRKQLPQESQMFDAVHNNFMRLMKQLYSTANCLKACTAQGLLESFQDMNNKLERIQKSLDNYLENKRQQFPRFYFLSSDDLLEILGQAKDPLNVQPHLKKCFEGIKKLDMHLPGEDRKQTISVGITSPDGEYLPFANPVITEGRPEEWLNRVEDAMFLTTKKHLYKVLEESKAQKKEKWVKENQGQMIITAGQIVWTHECEKALADADSARKNLKLLKKKWISYLNKLTAVTRSKLNKIERNKVVALITIEVHARDVIEKLGKSNCSSTNDFEWVSQLRFYWDREKNDCIVKQVLSVFYYGYEYQGNNGRLVITPLTDRCYMTLGAAMFTRRGGNPLGPAGTGKTETVKDFGKALARYVIVFNCSDGVDYKMTGKMFSGLAQTGAWACLDEFNRIEVEVLSVVATQIAAVMQAIKESKKRFLFLGQEIRLNPSCGIFVTMNPGYAGRSELPDNLKAMLRPVSMMVPDFTLIAEIMMFSEGFSSAKVLAKKMIAIMELSQQQLSKQDHYDYGLRSFVIPIARAAGSLKRLDPEGSEEVILYRTMLDLIKPKLVYLDLPLFMALLSDLFPGVELPPADGGSLRRAIEAELRESNLQIVPEFVTKIIQVFDCKVARHGNMIVGRTGSGKSEAWKCLQRALGRLRKEEPDDDRFQKVHVHTINPLALSNDELYGCFEAATHEWQDGVLARIMRTVCKDETHEQKWILFDGPVDTLWIESMNTTLDDNKLLTLLSGERIAMTPAVSLLFEVEDLSQASPATVSRAGMIYLNVEDLGWRPFITSWLAAKQAAPGADAAIIDQVSKLVDKYMEAALEHKRLHCRELVPTDRLSCVRAFTRLWDALAVPENGVGTMPVDESAGPPGSKAAAAAAAAAAAAAPPEETSGGTGGNLVEMWFLFCLIWGIGGPLDEEGRKKFDAFMREMDTRYPSSDTVFEYFVEPKAKSWLAWETKLTGAFKPAMDQPFFKILVPTVDTVRNRFVGSALVRVSQHTLIVGNVGVGKTMIVGSLLEGLPGDRMSSMTINFSAQTSSNSLQDTIEGKLEKRTKGVFAPAGGKRLVCFIDDLNMPQKSKFGFIPPLELLKLWVDNGFWYDRAKCEVKHIKDMQLLAAMAPPGGGRNAFSQRVQACFATLNVTAPNDNQLKRIFGTILNAKLADFDDEVKPLSEPITMATIGIYRAVSKELLPTPSKSHYLFNTRDLAKIIQGMMQATKAFYNSKEEVLQLWCHECMRIIADRMWDHADKEWLVRQLDEKLGTTFSTSFGTLFEAYNETVPPFVTFMRQNVDVPVYEAVRDMVALKDLLTERLEDYALEPGHSAMDLVLFRDALSHVCRIHRILGQPRGNALLVGVGGSGRKSLARLAAFVAELKCFTIEITKNYRQTEFREDLKGLYRQAGVANKPTVFLFDETQIVYETFLEDVNNILTSGEVPNLFPKDELGSVLDELRPAAKAAGAGETADALYGFLLERVRTNLHVVLCLSPVGEAFRERCRMFPGLVNCTTIDWFTEWPADALFEVAQKQLMDVDLGSTEVKTAVCKVFVTAHQSVENTSAKMFAALKRRNYVTPTNYLETVRGYKGLLAEKRTELGEKAAKLQGGLHKLDETSVQVAAMKKVAEEKKVVVAQAKADCEELLVEIVQDKRVADEQEKQVNAEAQKIGKEAEEANIIAAQVQQELDKALPALREAEAALDVLTKKDMSELKAYAKPPEKVEMTLNAVLTVLRRPPNWDEAKKRLSDANFMQSLKEFDKDKLDDSLLKKIGKFTANPDFTYEKINTVSAAASGMCKWVHAMETYGYVAKDVAPKRAKLKSAQDTLARKQAALALAQEQLAVVLAKVQALKDKYDTSIARKQALEEELADLEGKLERAEKLVTGLAGERVRWEASISEYNIALGCLPGDVVVAAAFMSYAGPFPSEYRDELVKHTWLPQVKALNIPASEHFDFALFLANPAMVRDWNIQGLPSDSFSTENGVMVTRGRRWPLMIDPQGQANKWIKNMEGRGGRLKVLNLQMSDMARQIENAIQFGQPVLMQDILQEIDPILEPVLAKSFIKRGNQTLIKLGDKEVDYNFDFRLYLTTKLANPLYTPEISTKVMIVNFAVKEQGLEAQLLATVVKNERPDLDKQKNDLVVKVAAGKRTQAELEDTILHLLSTATGSLLDNVTLINTLDQSKTTWEEVNASLAVAEETQKKIEAASQLYRPCSVRASVLYFVLNDLSTIDPMYQFSLDAYNDLFLLSIKNSPKNDNLAERIKSLNDFHTYAVYKYTSRGLFERHKLLLSLQMCVRILQTANQVNTEEWQFFLRGGTVLDRSSQPNNPSQEWISEEAWDNITELDALPNFKGVVSSFESNLGEWEAWYRKGDPEASELPAEWESKCNELQRLILVRCLRPDRVIFAATTYVSNALGRKYVEPPVLDLAETLKDSTALSPLIFVLSAGVDPTDNLRKLATEKGMTSRFFTVALGQGQAPTATRLIEDGLREGNWVFLANCHLMTSWLPTLDKIIEGFETKQPHENFRLWLSSNPSPSFPIAILQRGIKMTTEPPKGLRANLLRLYNSVSDASYAQCKTQIKYQKLLFALTYFHSVLLERRKFRTLGFNIPYDFNDTDFSVSDDLLKSYLDSYEQTPWDALKYLIAEANYGGRVTDELDRRVLASYLNKFYCEDALAVPGYLLSPLSTYYVPENGPLQSFKDYILTLPAGDRPEAFGQHPNAEISYLIEDSKVLLDSLLSLQPRTEGAAGGAGTRREDVVMAIATDLLDQVPQPFNLEEVMKAKADDPSALHVVLFQEVERYNALLVAVRRSCVELQRGIKGLVVMSADLDLIFESLYAAKVPAAWLKTYPSLKPLGPWTRDLLQRIEQLATWVEETYPRVYWLSGFTYPTGFLTAVLQTTARKASVPIDTLSFEFSIINLDEREINAPPKEGVYIKGLFLEGAGWDFENGCLCEPNPMELIVPMPILLFRPVENKKRTAKGIYTCPLYLYPLRTGTRERPSFMINVDLRSGSADPDHWIMRGTALLLSLAT.

The interval 1 to 1806 (MEPGDEGKGH…IVKQVLSVFY (1806 aa)) is stem. Coiled coils occupy residues 192 to 223 (KAAA…NQQD), 1544 to 1577 (TAQG…RQQF), and 1704 to 1727 (THEC…LKKK). AAA regions lie at residues 1807–2028 (YGYE…PIAR), 2089–2350 (RAIE…VPEN), 2458–2706 (FKPA…IIQG), and 2808–3059 (DYAL…LKRR). ATP-binding positions include 1845-1852 (GPAGTGKT), 2127-2134 (GRTGSGKS), 2497-2504 (GNVGVGKT), and 2848-2855 (GVGGSGRK). Coiled coils occupy residues 3107–3193 (AAMK…LTKK), 3301–3384 (KRAK…SISE), and 3499–3519 (RLKV…NAIQ). The stalk stretch occupies residues 3107 to 3384 (AAMKKVAEEK…RVRWEASISE (278 aa)). 2 AAA regions span residues 3443–3674 (LANP…EVNA) and 3890–4109 (ATTY…LLKS).

In terms of assembly, the I1 inner arm complex (also known as the f dynein complex) is a two-headed isoform composed of two heavy chains (1-alpha and 1-beta), three intermediate chains and three light chains. I1 occupies a specific position proximal to the first radial spoke and repeats every 96 nm along the length of the axoneme.

The protein resides in the cell projection. It is found in the cilium. Its subcellular location is the flagellum. It localises to the cytoplasm. The protein localises to the cytoskeleton. The protein resides in the flagellum axoneme. Force generating protein of eukaryotic cilia and flagella. Produces force towards the minus ends of microtubules. Dynein has ATPase activity; the force-producing power stroke is thought to occur on release of ADP. Required for assembly of the I1 inner arm complex and its targeting to the appropriate axoneme location. Also required for phototaxis. In Chlamydomonas reinhardtii (Chlamydomonas smithii), this protein is Dynein-1-beta heavy chain, flagellar inner arm I1 complex (DHC10).